The following is a 654-amino-acid chain: Peptide-N(4)-(N-acetyl-beta-glucosaminyl)asparagine amidase (654 aa).

Residue alanine 2 is modified to N-acetylalanine. In terms of domain architecture, PUB spans 30–91 (EASKLLLTYA…EGETHLIFPK (62 aa)). A disordered region spans residues 112–163 (RLDGSNKSHKVKSSQQPAASTQLPTTPSSNPSGLNQHTRNRQGQSSDPPSAS). The segment covering 124 to 163 (SSQQPAASTQLPTTPSSNPSGLNQHTRNRQGQSSDPPSAS) has biased composition (polar residues). Threonine 137 carries the post-translational modification Phosphothreonine. Zn(2+) is bound by residues cysteine 250, cysteine 253, cysteine 283, and cysteine 286. Residue cysteine 309 is the Nucleophile of the active site. Catalysis depends on residues histidine 336 and aspartate 353. A PAW domain is found at 454 to 654 (ELGGRISGSV…LEIIIKFSDL (201 aa)).

Belongs to the transglutaminase-like superfamily. PNGase family. Component of a complex required to couple retrotranslocation, ubiquitination and deglycosylation composed of NGLY1, SAKS1, AMFR, VCP and RAD23B. Interacts with the proteasome components RAD23B and PSMC1. Interacts with directly with VCP. Interacts with DERL1, bringing it close to the endoplasmic reticulum membrane. Interacts with SAKS1. Requires Zn(2+) as cofactor.

It is found in the cytoplasm. It catalyses the reaction Hydrolysis of an N(4)-(acetyl-beta-D-glucosaminyl)asparagine residue in which the glucosamine residue may be further glycosylated, to yield a (substituted) N-acetyl-beta-D-glucosaminylamine and a peptide containing an aspartate residue.. Its activity is regulated as follows. Inhibited by Z-VAD-fmk, a well-known caspase inhibitor, which inhibits enzyme activity through covalent binding of the carbohydrate to the single Cys-306 residue. Its function is as follows. Specifically deglycosylates the denatured form of N-linked glycoproteins in the cytoplasm and assists their proteasome-mediated degradation. Cleaves the beta-aspartyl-glucosamine (GlcNAc) of the glycan and the amide side chain of Asn, converting Asn to Asp. Prefers proteins containing high-mannose over those bearing complex type oligosaccharides. Can recognize misfolded proteins in the endoplasmic reticulum that are exported to the cytosol to be destroyed and deglycosylate them, while it has no activity toward native proteins. Deglycosylation is a prerequisite for subsequent proteasome-mediated degradation of some, but not all, misfolded glycoproteins. The protein is Peptide-N(4)-(N-acetyl-beta-glucosaminyl)asparagine amidase (NGLY1) of Homo sapiens (Human).